We begin with the raw amino-acid sequence, 31 residues long: Protamine CIII (31 aa).

The segment at 1-31 is disordered; that stretch reads MPRRRRASRPVRRRRRPRVSRRRRRGGRRRR.

Testis.

It is found in the nucleus. The protein localises to the chromosome. Protamines substitute for histones in the chromatin of sperm during the haploid phase of spermatogenesis. They compact sperm DNA into a highly condensed, stable and inactive complex. The chain is Protamine CIII from Oncorhynchus mykiss (Rainbow trout).